A 252-amino-acid polypeptide reads, in one-letter code: UPF0246 protein FP0718 (252 aa).

Belongs to the UPF0246 family.

The polypeptide is UPF0246 protein FP0718 (Flavobacterium psychrophilum (strain ATCC 49511 / DSM 21280 / CIP 103535 / JIP02/86)).